The sequence spans 1254 residues: Histone-lysine N-methyltransferase eggless (1254 aa).

Disordered regions lie at residues 24 to 209 (ALVE…EIPR) and 228 to 248 (PVPR…SKTT). Basic and acidic residues-rich tracts occupy residues 40 to 57 (TPEK…KDLT) and 65 to 81 (KSQE…KDPE). Residues 112-125 (SVELLESPLKSPSS) show a composition bias toward low complexity. Residues 136–162 (LEEKEKPGPAKELEPKESEPDSKESSK) are compositionally biased toward basic and acidic residues. Residues 172 to 181 (ELISSPTSDD) show a composition bias toward polar residues. Composition is skewed to basic and acidic residues over residues 182-197 (SLAK…EHGQ) and 234-243 (AMQESKETQK). Residues 391-416 (TILQAKIERLAKKFEEVDLQLAQVQG) adopt a coiled-coil conformation. Tudor domains lie at 535–607 (RLPI…SEKV) and 634–691 (QCTK…KETQ). The tract at residues 734–760 (ARKSTSKSGSPASTAAPPTGSSSSSAV) is disordered. The segment covering 739–759 (SKSGSPASTAAPPTGSSSSSA) has biased composition (low complexity). Residues 811–877 (LDSYSPLSKP…DNFDFTPDLR (67 aa)) form the MBD domain. Residues 939-1011 (VCCDCEDDCS…NCLNRVVQHS (73 aa)) enclose the Pre-SET domain. Residues cysteine 941, cysteine 943, cysteine 947, cysteine 953, cysteine 955, cysteine 993, cysteine 997, cysteine 999, and cysteine 1003 each coordinate Zn(2+). An SET domain is found at 1014–1229 (MKLQVFKTSN…SGTELTWNYN (216 aa)). S-adenosyl-L-methionine contacts are provided by residues 1024–1026 (RGW), aspartate 1062, and tyrosine 1064. Over residues 1081–1090 (YESDVERADL) the composition is skewed to basic and acidic residues. Residues 1081–1139 (YESDVERADLDHEDDNYGPDAEDDDDFRPNNYYQKKKEKLRSSRSNSSSTQNTELDSQE) form a disordered region. Residues 1091–1106 (DHEDDNYGPDAEDDDD) show a composition bias toward acidic residues. A compositionally biased stretch (low complexity) spans 1123–1134 (SRSNSSSTQNTE). Residues arginine 1183 and 1186-1187 (NH) each bind S-adenosyl-L-methionine. 4 residues coordinate Zn(2+): cysteine 1189, cysteine 1242, cysteine 1244, and cysteine 1249. The region spanning 1238 to 1254 (KVLYCQCGAQNCRVRLL) is the Post-SET domain.

This sequence belongs to the class V-like SAM-binding methyltransferase superfamily. Histone-lysine methyltransferase family. Suvar3-9 subfamily.

Its subcellular location is the nucleus. It localises to the chromosome. It carries out the reaction L-lysyl(9)-[histone H3] + 3 S-adenosyl-L-methionine = N(6),N(6),N(6)-trimethyl-L-lysyl(9)-[histone H3] + 3 S-adenosyl-L-homocysteine + 3 H(+). Functionally, histone methyltransferase that specifically trimethylates 'Lys-9' of histone H3 in ovary. H3 'Lys-9' trimethylation represents a specific tag for epigenetic transcriptional repression by recruiting Su(var)205/HP1 to methylated histones. Plays a central role during oogenesis. This is Histone-lysine N-methyltransferase eggless (egg) from Drosophila pseudoobscura pseudoobscura (Fruit fly).